The chain runs to 227 residues: 2-C-methyl-D-erythritol 4-phosphate cytidylyltransferase (227 aa).

This sequence belongs to the IspD/TarI cytidylyltransferase family. IspD subfamily.

It carries out the reaction 2-C-methyl-D-erythritol 4-phosphate + CTP + H(+) = 4-CDP-2-C-methyl-D-erythritol + diphosphate. The protein operates within isoprenoid biosynthesis; isopentenyl diphosphate biosynthesis via DXP pathway; isopentenyl diphosphate from 1-deoxy-D-xylulose 5-phosphate: step 2/6. In terms of biological role, catalyzes the formation of 4-diphosphocytidyl-2-C-methyl-D-erythritol from CTP and 2-C-methyl-D-erythritol 4-phosphate (MEP). This Lachnospira eligens (strain ATCC 27750 / DSM 3376 / VPI C15-48 / C15-B4) (Eubacterium eligens) protein is 2-C-methyl-D-erythritol 4-phosphate cytidylyltransferase.